A 422-amino-acid polypeptide reads, in one-letter code: Phosphoserine aminotransferase 2, chloroplastic (422 aa).

A chloroplast-targeting transit peptide spans 1 to 50 (MAASTNSFLIGNQTQIPSLKPKSISQSFIHFTKPNTINLTTRTKSVSIRC). Residue Ala-51 is modified to N-acetylalanine. Residue Arg-101 participates in L-glutamate binding. Residues 135-136 (AT), Trp-161, Thr-211, Asp-233, and Gln-256 each bind pyridoxal 5'-phosphate. Lys-257 carries the post-translational modification N6-(pyridoxal phosphate)lysine. Pyridoxal 5'-phosphate is bound at residue 298–299 (NT).

The protein belongs to the class-V pyridoxal-phosphate-dependent aminotransferase family. SerC subfamily. It depends on pyridoxal 5'-phosphate as a cofactor.

Its subcellular location is the plastid. It is found in the chloroplast. The enzyme catalyses O-phospho-L-serine + 2-oxoglutarate = 3-phosphooxypyruvate + L-glutamate. The catalysed reaction is 4-(phosphooxy)-L-threonine + 2-oxoglutarate = (R)-3-hydroxy-2-oxo-4-phosphooxybutanoate + L-glutamate. It participates in amino-acid biosynthesis; L-serine biosynthesis; L-serine from 3-phospho-D-glycerate: step 2/3. Involved in the plastidial phosphorylated pathway of serine biosynthesis (PPSB). Catalyzes the reversible conversion of 3-phosphohydroxypyruvate to phosphoserine. This chain is Phosphoserine aminotransferase 2, chloroplastic (PSAT2), found in Arabidopsis thaliana (Mouse-ear cress).